The chain runs to 30 residues: Snaclec coagulation factor IX/factor X-binding protein subunit A (30 aa).

The region spanning 1–30 (DCPSDWSPYEGHCYKHFIKWMNNEDAERFC) is the C-type lectin domain. Cys2 and Cys13 are disulfide-bonded.

The protein belongs to the snaclec family. In terms of assembly, heterodimer of subunits A and B; disulfide-linked. Expressed by the venom gland.

The protein resides in the secreted. In terms of biological role, anticoagulant protein which binds to the gamma-carboxyglutamic acid-domain regions of factors IX (F9) and factor X (F10) in the presence of calcium with a 1 to 1 stoichiometry. The polypeptide is Snaclec coagulation factor IX/factor X-binding protein subunit A (Bothrops jararaca (Jararaca)).